The chain runs to 275 residues: Coagulation factor IX (275 aa).

Position 23 is a sulfotyrosine (Y23). The N-linked (GlcNAc...) asparagine glycan is linked to N25. At T27 the chain carries Phosphothreonine. N-linked (GlcNAc...) asparagine glycosylation is present at N35. A glycan (O-linked (GalNAc...) threonine) is linked at T47. One can recognise a Peptidase S1 domain in the interval 49 to 275 (IVGGENAKPG…YTRVSWYVNW (227 aa)). The cysteines at positions 74 and 90 are disulfide-linked. H89 (charge relay system) is an active-site residue. N-linked (GlcNAc...) asparagine glycosylation occurs at N96. The Ca(2+) site is built by E103, N105, E108, E110, and E113. An N-linked (GlcNAc...) asparagine glycan is attached at N128. The Charge relay system role is filled by D137. 2 cysteine pairs are disulfide-bonded: C204-C218 and C229-C257. S233 serves as the catalytic Charge relay system.

Belongs to the peptidase S1 family. In terms of assembly, heterodimer of a light chain and a heavy chain; disulfide-linked. Interacts (inactive and activated) with F11 (activated) in calcium-dependent manner. Interacts with SERPINC1. Activated by factor XIa, which excises the activation peptide. The propeptide can also be removed by snake venom protease. Activated by coagulation factor VIIa-tissue factor (F7-F3) complex in calcium-dependent manner.

It is found in the secreted. It catalyses the reaction Selective cleavage of Arg-|-Ile bond in factor X to form factor Xa.. Factor IX is a vitamin K-dependent plasma protein that participates in the intrinsic pathway of blood coagulation by converting factor X to its active form in the presence of Ca(2+) ions, phospholipids, and factor VIIIa. This chain is Coagulation factor IX (F9), found in Oryctolagus cuniculus (Rabbit).